The following is a 348-amino-acid chain: Erythronate-4-phosphate dehydrogenase (348 aa).

Residues Thr46 and Thr67 each coordinate substrate. Asp147 serves as a coordination point for NAD(+). Arg209 is an active-site residue. Asp233 lines the NAD(+) pocket. Residue Glu238 is part of the active site. Residue His255 is the Proton donor of the active site. Gly258 contributes to the NAD(+) binding site. Residue Tyr259 coordinates substrate.

The protein belongs to the D-isomer specific 2-hydroxyacid dehydrogenase family. PdxB subfamily. In terms of assembly, homodimer.

It localises to the cytoplasm. It catalyses the reaction 4-phospho-D-erythronate + NAD(+) = (R)-3-hydroxy-2-oxo-4-phosphooxybutanoate + NADH + H(+). It participates in cofactor biosynthesis; pyridoxine 5'-phosphate biosynthesis; pyridoxine 5'-phosphate from D-erythrose 4-phosphate: step 2/5. Catalyzes the oxidation of erythronate-4-phosphate to 3-hydroxy-2-oxo-4-phosphonooxybutanoate. The chain is Erythronate-4-phosphate dehydrogenase from Bacteroides fragilis (strain YCH46).